The sequence spans 446 residues: Movement protein TGB1 (446 aa).

The segment at 40–60 is disordered; that stretch reads NKLDKRLQNTRKKNKNKEKTR. One can recognise a (+)RNA virus helicase ATP-binding domain in the interval 160 to 303; sequence KACCKKERNQ…WLHVPIVFSS (144 aa). Residue 193–200 participates in ATP binding; sequence GVPGSGKS. Positions 304 to 444 constitute a (+)RNA virus helicase C-terminal domain; the sequence is DSSHRFGPET…CYGEEHRPDE (141 aa).

The protein belongs to the virgaviridae/benyvirus TGB1 movement protein family. In terms of assembly, homooligomer. Interacts with movement protein TGB3. TGB1-TGB3-TGB2 complex formation is enhanced by ATP hydrolysis. Interacts with the suppressor of RNA silencing (via N-terminus). It depends on Mg(2+) as a cofactor.

It is found in the host cell junction. It localises to the host plasmodesma. The protein localises to the host nucleus. The protein resides in the host cytoplasm. Its subcellular location is the host nucleolus. It is found in the host cytoskeleton. The enzyme catalyses ATP + H2O = ADP + phosphate + H(+). In terms of biological role, participates in the transport of viral genome to neighboring plant cells directly through plasmodesmata, without any budding. Multifunctional movement protein with RNA-binding, ATPase and helicase activities. Engages in homologous interactions leading to the formation of a ribonucleoprotein complex containing plus-sense viral RNAs (vRNPs). ATPase activity is probably required for vRNPs movement complex assembly. Intracellular delivery of TGBp1-containing vRNPs to plasmodesmata is facilitated by TGBp2 and TGBp3. The chain is Movement protein TGB1 from Arachis hypogaea (Peanut).